The primary structure comprises 244 residues: L-xylulose reductase (244 aa).

An N-acetylmethionine modification is found at Met-1. Residue 11 to 39 coordinates NADP(+); sequence LVTGAGKGIGRSTVLALKAAGAQVVAVSR. At Arg-21 the chain carries Omega-N-methylarginine. Residue Ser-136 coordinates substrate. Residue Tyr-149 is the Proton acceptor of the active site. The active site involves Lys-153.

This sequence belongs to the short-chain dehydrogenases/reductases (SDR) family. As to quaternary structure, homotetramer. Highly expressed in kidney, liver and epididymis. Expressed at intermediate level in lung. Weakly or not expressed in brain, heart, spleen and testis.

It localises to the membrane. Its subcellular location is the apical cell membrane. It carries out the reaction xylitol + NADP(+) = L-xylulose + NADPH + H(+). Its function is as follows. Catalyzes the NADPH-dependent reduction of several pentoses, tetroses, trioses, alpha-dicarbonyl compounds and L-xylulose. Participates in the uronate cycle of glucose metabolism. May play a role in the water absorption and cellular osmoregulation in the proximal renal tubules by producing xylitol, an osmolyte, thereby preventing osmolytic stress from occurring in the renal tubules. The protein is L-xylulose reductase (Dcxr) of Mus musculus (Mouse).